The sequence spans 107 residues: Potassium voltage-gated channel subfamily E member 3 (107 aa).

N-linked (GlcNAc...) asparagine glycosylation is found at asparagine 5, asparagine 22, and asparagine 45. The tract at residues cysteine 31 to leucine 54 is disordered. Residues serine 61–leucine 81 form a helical membrane-spanning segment. The interval phenylalanine 72–tyrosine 83 is interaction with KCNQ1. The Cytoplasmic segment spans residues glycine 82–arginine 103.

This sequence belongs to the potassium channel KCNE family. As to quaternary structure, interacts with KCNB1. Interacts with KCNC2. Associates with KCNC4/Kv3.4. Interacts with KCNQ1; associates with a KCNQ1:KCNE3 stoichiometry of 4:4; produces a current with nearly instantaneous activation with a linear current-voltage relationship and alters membrane raft localization; affects KCNQ1 structure and gating properties.

The protein localises to the cell membrane. It localises to the cytoplasm. Its subcellular location is the perikaryon. It is found in the cell projection. The protein resides in the dendrite. The protein localises to the membrane raft. Functionally, ancillary protein that functions as a regulatory subunit of the voltage-gated potassium (Kv) channel complex composed of pore-forming and potassium-conducting alpha subunits and of regulatory beta subunits. KCNE3 beta subunit modulates the gating kinetics and enhances stability of the channel complex. Alters the gating of the delayed rectifier Kv channel containing KCNB1 alpha subunit. Associates with KCNC4/Kv3.4 alpha subunit to form the subthreshold Kv channel in skeletal muscle and to establish the resting membrane potential (RMP) in muscle cells. Association with KCNQ1/KCLQT1 alpha subunit may form the intestinal cAMP-stimulated potassium channel involved in chloride secretion that produces a current with nearly instantaneous activation with a linear current-voltage relationship. The protein is Potassium voltage-gated channel subfamily E member 3 of Rattus norvegicus (Rat).